Consider the following 157-residue polypeptide: Class-10 pathogenesis-related protein 1 (157 aa).

It belongs to the BetVI family. In terms of tissue distribution, expressed in roots. Detected in nodules and leaves, but not in stems and flowers.

In Medicago truncatula (Barrel medic), this protein is Class-10 pathogenesis-related protein 1 (PR10-1).